We begin with the raw amino-acid sequence, 107 residues long: Large ribosomal subunit protein mL55 (107 aa).

The transit peptide at Met1–Ile16 directs the protein to the mitochondrion.

Belongs to the mitochondrion-specific ribosomal protein mL55 family. Component of the mitochondrial ribosome large subunit (39S) which comprises a 16S rRNA and about 50 distinct proteins. In terms of tissue distribution, ubiquitously expressed (at protein level).

It localises to the mitochondrion. In terms of biological role, involved in mitochondrial biogenesis and G2/M phase cell cycle progression. The sequence is that of Large ribosomal subunit protein mL55 (mRpL55) from Drosophila melanogaster (Fruit fly).